The primary structure comprises 282 residues: Probable protein phosphatase 2C 10 (282 aa).

Residues 34 to 281 (KFGYSLVKGK…DDISCIVVRL (248 aa)) enclose the PPM-type phosphatase domain. Mn(2+)-binding residues include aspartate 71, glycine 72, aspartate 233, and aspartate 272.

The protein belongs to the PP2C family. Mg(2+) is required as a cofactor. Mn(2+) serves as cofactor.

It catalyses the reaction O-phospho-L-seryl-[protein] + H2O = L-seryl-[protein] + phosphate. The catalysed reaction is O-phospho-L-threonyl-[protein] + H2O = L-threonyl-[protein] + phosphate. This is Probable protein phosphatase 2C 10 from Arabidopsis thaliana (Mouse-ear cress).